The following is a 256-amino-acid chain: Putative F-box protein At3g51171 (256 aa).

The region spanning 1–44 is the F-box domain; the sequence is MVPLPWELEEDILSRLAAQSLVRFRSVCKRWNYLFDEKSFIKNH.

The protein is Putative F-box protein At3g51171 of Arabidopsis thaliana (Mouse-ear cress).